We begin with the raw amino-acid sequence, 477 residues long: Zinc metalloproteinase/disintegrin (477 aa).

The signal sequence occupies residues 1 to 19; the sequence is MIQVLLVIICLAVPYQGSS. Positions 20-186 are excised as a propeptide; sequence IILESGNVND…PIKKASQSNL (167 aa). The 197-residue stretch at 192–388 folds into the Peptidase M12B domain; that stretch reads RYIELVIVAD…QKPQCILNKP (197 aa). The Ca(2+) site is built by Glu195 and Asp279. 3 cysteine pairs are disulfide-bonded: Cys303/Cys383, Cys343/Cys367, and Cys345/Cys350. His328 serves as a coordination point for Zn(2+). Glu329 is an active-site residue. The Zn(2+) site is built by His332 and His338. 2 residues coordinate Ca(2+): Cys383 and Asn386. Residues 389 to 404 constitute a propeptide that is removed on maturation; that stretch reads LRTDTVSTPVSGNELL. Residues 396–477 form the Disintegrin domain; sequence TPVSGNELLE…AGCPRNPFHA (82 aa). Disulfide bonds link Cys410/Cys425, Cys412/Cys420, Cys419/Cys442, Cys433/Cys439, Cys438/Cys463, and Cys451/Cys470. The Cell attachment site signature appears at 455 to 457; sequence RGD.

Belongs to the venom metalloproteinase (M12B) family. P-II subfamily. P-IIa sub-subfamily. As to quaternary structure, monomer. It depends on Zn(2+) as a cofactor. In terms of tissue distribution, expressed by the venom gland.

The protein resides in the secreted. Functionally, impairs hemostasis in the envenomed animal. In terms of biological role, inhibits platelet aggregation induced by ADP, thrombin, platelet-activating factor and collagen. Acts by inhibiting fibrinogen interaction with platelet receptors GPIIb/GPIIIa (ITGA2B/ITGB3). This Gloydius halys (Chinese water mocassin) protein is Zinc metalloproteinase/disintegrin.